The primary structure comprises 389 residues: MLLMLAQWLQDDFGFFRVFNYITFRAVMATVTALLIGLAAGPWVIRKLAALKVGQAVRTDGPQTHLVKSGTPTMGGVLILIGIFISCILWADLSNRFIWIVMIVTFGFGLVGWVDDYRKVVYKDPKGMASRGKFFWQTLIGLFAAIYLAFSVSEVNNLKVLQLFYKWLRSGFALDLPAKTNLLLPFMKEVSYPLGIMGFIILSYLVIVGSSNAVNLTDGLDGLVIMPVILVGAALGAFAYVMGNAIYAKYLLFPYIPGAGELMIFCGAMGGAGLAFLWYNTHPAQVFMGDVGALALGGALGTIAVIVRQEIVLFVMGGIFVAETISVMLQVFWFKVTKKHFGEGRRIFRMAPLHHHFELGGWKETQVVVRFWIITILLVLIGLSSLKLR.

10 consecutive transmembrane segments (helical) span residues 25 to 45 (RAVM…PWVI), 73 to 93 (TMGG…WADL), 97 to 117 (FIWI…VDDY), 134 to 154 (FFWQ…SVSE), 190 to 210 (VSYP…IVGS), 222 to 242 (GLVI…AYVM), 258 to 278 (GAGE…AFLW), 286 to 306 (VFMG…IAVI), 311 to 331 (IVLF…MLQV), and 366 to 386 (QVVV…LSSL).

Belongs to the glycosyltransferase 4 family. MraY subfamily. The cofactor is Mg(2+).

It localises to the cell inner membrane. The enzyme catalyses UDP-N-acetyl-alpha-D-muramoyl-L-alanyl-gamma-D-glutamyl-meso-2,6-diaminopimeloyl-D-alanyl-D-alanine + di-trans,octa-cis-undecaprenyl phosphate = di-trans,octa-cis-undecaprenyl diphospho-N-acetyl-alpha-D-muramoyl-L-alanyl-D-glutamyl-meso-2,6-diaminopimeloyl-D-alanyl-D-alanine + UMP. It participates in cell wall biogenesis; peptidoglycan biosynthesis. Catalyzes the initial step of the lipid cycle reactions in the biosynthesis of the cell wall peptidoglycan: transfers peptidoglycan precursor phospho-MurNAc-pentapeptide from UDP-MurNAc-pentapeptide onto the lipid carrier undecaprenyl phosphate, yielding undecaprenyl-pyrophosphoryl-MurNAc-pentapeptide, known as lipid I. The polypeptide is Phospho-N-acetylmuramoyl-pentapeptide-transferase (Polynucleobacter necessarius subsp. necessarius (strain STIR1)).